The sequence spans 336 residues: tRNA N6-adenosine threonylcarbamoyltransferase (336 aa).

Fe cation is bound by residues His-114 and His-118. Residues 136–140 (LVSGG), Asp-169, Gly-182, Asp-186, and Asn-275 each bind substrate. Asp-301 is a binding site for Fe cation.

This sequence belongs to the KAE1 / TsaD family. The cofactor is Fe(2+).

The protein localises to the cytoplasm. The enzyme catalyses L-threonylcarbamoyladenylate + adenosine(37) in tRNA = N(6)-L-threonylcarbamoyladenosine(37) in tRNA + AMP + H(+). Required for the formation of a threonylcarbamoyl group on adenosine at position 37 (t(6)A37) in tRNAs that read codons beginning with adenine. Is involved in the transfer of the threonylcarbamoyl moiety of threonylcarbamoyl-AMP (TC-AMP) to the N6 group of A37, together with TsaE and TsaB. TsaD likely plays a direct catalytic role in this reaction. The polypeptide is tRNA N6-adenosine threonylcarbamoyltransferase (Streptococcus pneumoniae serotype 19F (strain G54)).